Reading from the N-terminus, the 166-residue chain is Cyclic pyranopterin monophosphate synthase (166 aa).

Residues 83–85 and 121–122 contribute to the substrate site; these read LCH and ME. Aspartate 136 is an active-site residue.

The protein belongs to the MoaC family. In terms of assembly, homohexamer; trimer of dimers.

It catalyses the reaction (8S)-3',8-cyclo-7,8-dihydroguanosine 5'-triphosphate = cyclic pyranopterin phosphate + diphosphate. It functions in the pathway cofactor biosynthesis; molybdopterin biosynthesis. Catalyzes the conversion of (8S)-3',8-cyclo-7,8-dihydroguanosine 5'-triphosphate to cyclic pyranopterin monophosphate (cPMP). In Syntrophobacter fumaroxidans (strain DSM 10017 / MPOB), this protein is Cyclic pyranopterin monophosphate synthase.